A 49-amino-acid chain; its full sequence is DNA-directed RNA polymerase subunit Rpo12 (49 aa).

The Zn(2+) site is built by Cys11, Cys27, and Cys30.

It belongs to the archaeal Rpo12/eukaryotic RPC10 RNA polymerase subunit family. In terms of assembly, part of the RNA polymerase complex. The cofactor is Zn(2+).

Its subcellular location is the cytoplasm. It carries out the reaction RNA(n) + a ribonucleoside 5'-triphosphate = RNA(n+1) + diphosphate. Its function is as follows. DNA-dependent RNA polymerase (RNAP) catalyzes the transcription of DNA into RNA using the four ribonucleoside triphosphates as substrates. This Pyrococcus horikoshii (strain ATCC 700860 / DSM 12428 / JCM 9974 / NBRC 100139 / OT-3) protein is DNA-directed RNA polymerase subunit Rpo12.